A 172-amino-acid chain; its full sequence is Adenine phosphoribosyltransferase (172 aa).

This sequence belongs to the purine/pyrimidine phosphoribosyltransferase family. Homodimer.

Its subcellular location is the cytoplasm. The catalysed reaction is AMP + diphosphate = 5-phospho-alpha-D-ribose 1-diphosphate + adenine. The protein operates within purine metabolism; AMP biosynthesis via salvage pathway; AMP from adenine: step 1/1. Its function is as follows. Catalyzes a salvage reaction resulting in the formation of AMP, that is energically less costly than de novo synthesis. The chain is Adenine phosphoribosyltransferase from Clostridium beijerinckii (strain ATCC 51743 / NCIMB 8052) (Clostridium acetobutylicum).